Here is a 447-residue protein sequence, read N- to C-terminus: Glycerol-3-phosphate acyltransferase ATS11, chloroplastic (447 aa).

The segment at 1–21 is disordered; the sequence is MFILSSSSSLPSPLSLSSSRV. A chloroplast-targeting transit peptide spans 1–48; the sequence is MFILSSSSSLPSPLSLSSSRVSLPPPSSSSLNLLPLSPHFQPPNLACS. An HXXXXD motif motif is present at residues 217–222; it reads HQTEAD.

Belongs to the GPAT/DAPAT family.

It localises to the plastid. Its subcellular location is the chloroplast stroma. The catalysed reaction is a fatty acyl-[ACP] + sn-glycerol 3-phosphate = a 1-acyl-sn-glycero-3-phosphate + holo-[ACP]. The enzyme catalyses sn-glycerol 3-phosphate + an acyl-CoA = a 1-acyl-sn-glycero-3-phosphate + CoA. The protein operates within phospholipid metabolism; CDP-diacylglycerol biosynthesis; CDP-diacylglycerol from sn-glycerol 3-phosphate: step 1/3. In terms of biological role, esterifies the acyl-group from acyl-acyl carrier proteins (acyl-ACPs) to the sn-1 position of glycerol-3-phosphate. The physiological acyl donors in chloroplasts are acyl-ACPs, but acyl-CoAs are used as artificial donor for in vitro reactions. The enzyme from chilling-resistant plants discriminates against non-fluid palmitic acid and selects oleic acid whereas the enzyme from sensitive plants accepts both fatty acids. Squash is chilling-sensitive. Preferably utilizes oleoyl groups (18:1-ACP) and has lower affinity to palmitoyl (16:0-ACP) and stearoyl groups (18:0-ACP). In Cucurbita moschata (Winter crookneck squash), this protein is Glycerol-3-phosphate acyltransferase ATS11, chloroplastic.